Here is a 441-residue protein sequence, read N- to C-terminus: Peroxisome proliferator-activated receptor delta (441 aa).

Residues Met-1–Leu-58 form a disordered region. The segment covering Ala-9 to Ala-21 has biased composition (basic and acidic residues). The span at Ser-36–Leu-55 shows a compositional bias: low complexity. Residues Leu-70–Phe-145 constitute a DNA-binding region (nuclear receptor). 2 consecutive NR C4-type zinc fingers follow at residues Cys-74 to Cys-94 and Cys-111 to Cys-133. One can recognise an NR LBD domain in the interval Phe-211–Asp-439.

This sequence belongs to the nuclear hormone receptor family. NR1 subfamily. In terms of assembly, heterodimer with the retinoid X receptor. Interacts (via domain NR LBD) with CRY1 and CRY2 in a ligand-dependent manner. In terms of processing, 'Lys-48'-linked polyubiquitinated; leading to proteasomal degradation. Deubiquitinated and stabilized by OTUD3.

Its subcellular location is the nucleus. Its function is as follows. Ligand-activated transcription factor key mediator of energy metabolism in adipose tissues. Receptor that binds peroxisome proliferators such as hypolipidemic drugs and fatty acids. Has a preference for poly-unsaturated fatty acids, such as gamma-linoleic acid and eicosapentanoic acid. Once activated by a ligand, the receptor binds to promoter elements of target genes. Regulates the peroxisomal beta-oxidation pathway of fatty acids. Functions as a transcription activator for the acyl-CoA oxidase gene. Decreases expression of NPC1L1 once activated by a ligand. In Canis lupus familiaris (Dog), this protein is Peroxisome proliferator-activated receptor delta (PPARD).